A 432-amino-acid polypeptide reads, in one-letter code: Phosphomevalonate kinase (432 aa).

Residues K10 and 142-148 (VEKTGLG) each bind ATP.

This sequence belongs to the GHMP kinase family. Mevalonate kinase subfamily.

It is found in the cytoplasm. The catalysed reaction is (R)-5-phosphomevalonate + ATP = (R)-5-diphosphomevalonate + ADP. The protein operates within isoprenoid biosynthesis; isopentenyl diphosphate biosynthesis via mevalonate pathway; isopentenyl diphosphate from (R)-mevalonate: step 2/3. Its function is as follows. Phosphomevalonate kinase; part of the second module of ergosterol biosynthesis pathway that includes the middle steps of the pathway. ERG8 converts 5-phosphomevalonate to 5-diphosphomevalonate. The second module is carried out in the vacuole and involves the formation of farnesyl diphosphate, which is also an important intermediate in the biosynthesis of ubiquinone, dolichol, heme and prenylated proteins. Activity by the mevalonate kinase ERG12 first converts mevalonate into 5-phosphomevalonate. 5-phosphomevalonate is then further converted to 5-diphosphomevalonate by the phosphomevalonate kinase ERG8. The diphosphomevalonate decarboxylase MVD then produces isopentenyl diphosphate. The isopentenyl-diphosphate delta-isomerase IDI1 then catalyzes the 1,3-allylic rearrangement of the homoallylic substrate isopentenyl (IPP) to its highly electrophilic allylic isomer, dimethylallyl diphosphate (DMAPP). Finally the farnesyl diphosphate synthase ERG20 catalyzes the sequential condensation of isopentenyl pyrophosphate with dimethylallyl pyrophosphate, and then with the resultant geranylpyrophosphate to the ultimate product farnesyl pyrophosphate. In Candida albicans (strain SC5314 / ATCC MYA-2876) (Yeast), this protein is Phosphomevalonate kinase.